We begin with the raw amino-acid sequence, 285 residues long: tRNA pseudouridine synthase B (285 aa).

The active-site Nucleophile is D40.

This sequence belongs to the pseudouridine synthase TruB family. Type 1 subfamily.

The enzyme catalyses uridine(55) in tRNA = pseudouridine(55) in tRNA. Responsible for synthesis of pseudouridine from uracil-55 in the psi GC loop of transfer RNAs. This Caldanaerobacter subterraneus subsp. tengcongensis (strain DSM 15242 / JCM 11007 / NBRC 100824 / MB4) (Thermoanaerobacter tengcongensis) protein is tRNA pseudouridine synthase B.